Reading from the N-terminus, the 450-residue chain is Folate synthesis bifunctional protein (450 aa).

An HPPK region spans residues 1–166 (MTTWNFVCLG…TFAELAAIYP (166 aa)). One can recognise a Pterin-binding domain in the interval 180-441 (TQIMGIVNVT…QVEGNRRVLA (262 aa)). The interval 182–450 (IMGIVNVTDD…AAAAWSGMPV (269 aa)) is DHPS. N187 is a Mg(2+) binding site. (7,8-dihydropterin-6-yl)methyl diphosphate is bound by residues T227, D267, N287, D358, K395, and 429–431 (RVH).

In the C-terminal section; belongs to the DHPS family. The protein in the N-terminal section; belongs to the HPPK family. The cofactor is Mg(2+).

It carries out the reaction 6-hydroxymethyl-7,8-dihydropterin + ATP = (7,8-dihydropterin-6-yl)methyl diphosphate + AMP + H(+). The enzyme catalyses (7,8-dihydropterin-6-yl)methyl diphosphate + 4-aminobenzoate = 7,8-dihydropteroate + diphosphate. It functions in the pathway cofactor biosynthesis; tetrahydrofolate biosynthesis; 2-amino-4-hydroxy-6-hydroxymethyl-7,8-dihydropteridine diphosphate from 7,8-dihydroneopterin triphosphate: step 4/4. It participates in cofactor biosynthesis; tetrahydrofolate biosynthesis; 7,8-dihydrofolate from 2-amino-4-hydroxy-6-hydroxymethyl-7,8-dihydropteridine diphosphate and 4-aminobenzoate: step 1/2. The polypeptide is Folate synthesis bifunctional protein (folKP) (Chlamydia muridarum (strain MoPn / Nigg)).